The primary structure comprises 381 residues: Succinyl-diaminopimelate desuccinylase (381 aa).

Residue histidine 71 coordinates Zn(2+). Residue aspartate 73 is part of the active site. Residue aspartate 104 coordinates Zn(2+). The active-site Proton acceptor is glutamate 136. 3 residues coordinate Zn(2+): glutamate 137, glutamate 166, and histidine 351.

It belongs to the peptidase M20A family. DapE subfamily. As to quaternary structure, homodimer. It depends on Zn(2+) as a cofactor. Requires Co(2+) as cofactor.

The catalysed reaction is N-succinyl-(2S,6S)-2,6-diaminopimelate + H2O = (2S,6S)-2,6-diaminopimelate + succinate. The protein operates within amino-acid biosynthesis; L-lysine biosynthesis via DAP pathway; LL-2,6-diaminopimelate from (S)-tetrahydrodipicolinate (succinylase route): step 3/3. Functionally, catalyzes the hydrolysis of N-succinyl-L,L-diaminopimelic acid (SDAP), forming succinate and LL-2,6-diaminopimelate (DAP), an intermediate involved in the bacterial biosynthesis of lysine and meso-diaminopimelic acid, an essential component of bacterial cell walls. This is Succinyl-diaminopimelate desuccinylase from Ehrlichia chaffeensis (strain ATCC CRL-10679 / Arkansas).